Reading from the N-terminus, the 303-residue chain is MTASAPAASASARLLDGRRIAEELLDGLKLRVDARVAAGKARPGLAVVLVGGDPASSVYVRNKRRAAEKVGIEAFDYDLPQGTSEAQLASLIDELNADPKIHGILIQLPLPGIPDANRLIQRIDPRKDVDGFHPQNVGHLALREFGLRPCTPRGIVTLLGHTDQPVRGRNATIVGVSNHVGRPMGLELLIAGCTVTSCHKFTPPDVLEASVRNADILVVAVGRPGLIPGEWVKPGAVVIDVGINRLDDGRLVGDVGFDAAAQRAAWITPVPGGVGPMTVATLMQNTIEAADAAGIQDSGFGIR.

NADP(+) is bound by residues 175 to 177 (GVS) and Ile-243.

This sequence belongs to the tetrahydrofolate dehydrogenase/cyclohydrolase family. Homodimer.

It catalyses the reaction (6R)-5,10-methylene-5,6,7,8-tetrahydrofolate + NADP(+) = (6R)-5,10-methenyltetrahydrofolate + NADPH. The enzyme catalyses (6R)-5,10-methenyltetrahydrofolate + H2O = (6R)-10-formyltetrahydrofolate + H(+). The protein operates within one-carbon metabolism; tetrahydrofolate interconversion. Its function is as follows. Catalyzes the oxidation of 5,10-methylenetetrahydrofolate to 5,10-methenyltetrahydrofolate and then the hydrolysis of 5,10-methenyltetrahydrofolate to 10-formyltetrahydrofolate. This Xanthomonas axonopodis pv. citri (strain 306) protein is Bifunctional protein FolD.